The sequence spans 94 residues: MIKSELVQIIASRNPHLFQRDVENIVGAVFDEITNALAEGNRVELRGFGAFSVKNRPARSGRNPRTGETVDVEEKWVPFFKTGKELRDRLNGAV.

This sequence belongs to the bacterial histone-like protein family. In terms of assembly, heterodimer of an alpha and a beta chain.

Functionally, this protein is one of the two subunits of integration host factor, a specific DNA-binding protein that functions in genetic recombination as well as in transcriptional and translational control. The polypeptide is Integration host factor subunit beta (Brucella anthropi (strain ATCC 49188 / DSM 6882 / CCUG 24695 / JCM 21032 / LMG 3331 / NBRC 15819 / NCTC 12168 / Alc 37) (Ochrobactrum anthropi)).